Reading from the N-terminus, the 185-residue chain is Elongation factor P (185 aa).

Belongs to the elongation factor P family.

The protein localises to the cytoplasm. The protein operates within protein biosynthesis; polypeptide chain elongation. Its function is as follows. Involved in peptide bond synthesis. Stimulates efficient translation and peptide-bond synthesis on native or reconstituted 70S ribosomes in vitro. Probably functions indirectly by altering the affinity of the ribosome for aminoacyl-tRNA, thus increasing their reactivity as acceptors for peptidyl transferase. In Cyanothece sp. (strain PCC 7425 / ATCC 29141), this protein is Elongation factor P.